A 443-amino-acid chain; its full sequence is Magnesium transporter MRS2-10 (443 aa).

Residues 1–33 form a disordered region; it reads MSELKERLLPPRPASAINLRGDAGSRPSPSGRQ. Transmembrane regions (helical) follow at residues 379-399 and 415-435; these read LLLT…GIFG and WVLA…LWYY. The Required for magnesium transport activity signature appears at 399-401; that stretch reads GMN.

This sequence belongs to the CorA metal ion transporter (MIT) (TC 1.A.35.5) family. Expressed in the whole plant.

It is found in the cell membrane. Functionally, high-affinity magnesium transporter that mediates the influx of magnesium. Involved in tolerance to Aluminum. The chain is Magnesium transporter MRS2-10 (MRS2-10) from Arabidopsis thaliana (Mouse-ear cress).